Consider the following 284-residue polypeptide: NADH-cytochrome b5 reductase 1 (284 aa).

A helical membrane pass occupies residues 8–28 (PLFVFSTIAIIISTFVIFYFV). An FAD-binding FR-type domain is found at 41–144 (DTFQKFPLIE…RGPKGFFTYT (104 aa)). FAD contacts are provided by residues 124–139 (DSKKVGEYVEIRGPKG) and 150–182 (SFGMIAGGTGIAPMYQIITAILRNPADKTKISL).

It belongs to the flavoprotein pyridine nucleotide cytochrome reductase family. Monomer. Component of the 2-(3-amino-3-carboxypropyl)histidine synthase complex composed of DPH1, DPH2, DPH3 and a NADH-dependent reductase, predominantly CBR1. Requires FAD as cofactor.

The protein localises to the mitochondrion outer membrane. The enzyme catalyses 2 Fe(III)-[cytochrome b5] + NADH = 2 Fe(II)-[cytochrome b5] + NAD(+) + H(+). It catalyses the reaction 2 Fe(3+)-[Dph3] + NADH = 2 Fe(2+)-[Dph3] + NAD(+) + H(+). It functions in the pathway protein modification; peptidyl-diphthamide biosynthesis. NADH-dependent reductase for DPH3 and cytochrome b5. Required for the first step of diphthamide biosynthesis, a post-translational modification of histidine which occurs in elongation factor 2. DPH1 and DPH2 transfer a 3-amino-3-carboxypropyl (ACP) group from S-adenosyl-L-methionine (SAM) to a histidine residue, the reaction is assisted by a reduction system comprising DPH3 and a NADH-dependent reductase, predominantly CBR1. By reducing DPH3, also involved in the formation of the tRNA wobble base modification mcm5s 2U (5-methoxycarbonylmethyl-2-thiouridine), mediated by the elongator complex. The cytochrome b5/NADH cytochrome b5 reductase electron transfer system supports the catalytic activity of several sterol biosynthetic enzymes. This chain is NADH-cytochrome b5 reductase 1 (CBR1), found in Scheffersomyces stipitis (strain ATCC 58785 / CBS 6054 / NBRC 10063 / NRRL Y-11545) (Yeast).